Consider the following 348-residue polypeptide: Major outer membrane protein P.IB (348 aa).

The first 19 residues, M1 to A19, serve as a signal peptide directing secretion.

This sequence belongs to the Gram-negative porin family. As to quaternary structure, homotrimer.

The protein resides in the cell outer membrane. Functionally, serves as a slightly cation selective porin. Major antigen on the gonococcal cell surface and it may have pathogenic properties in addition to its porin activity. The polypeptide is Major outer membrane protein P.IB (porB) (Neisseria gonorrhoeae).